Consider the following 230-residue polypeptide: Ion-translocating oxidoreductase complex subunit E (230 aa).

The next 6 membrane-spanning stretches (helical) occupy residues 18–38, 39–59, 69–89, 93–113, 124–144, and 182–202; these read ALVQ…ITNA, LGLG…VSLI, IPVF…LMNA, GLYL…IIIG, VLPA…VLVV, and SFLL…LIAL.

It belongs to the NqrDE/RnfAE family. As to quaternary structure, the complex is composed of six subunits: RnfA, RnfB, RnfC, RnfD, RnfE and RnfG.

The protein localises to the cell inner membrane. In terms of biological role, part of a membrane-bound complex that couples electron transfer with translocation of ions across the membrane. This Vibrio parahaemolyticus serotype O3:K6 (strain RIMD 2210633) protein is Ion-translocating oxidoreductase complex subunit E.